The following is a 308-amino-acid chain: Protein translocase subunit SecF (308 aa).

Helical transmembrane passes span Ser28 to Ile48, Ile140 to Val160, Trp164 to Phe184, Leu194 to Ile214, Ile246 to Ala266, and Val272 to Ile292.

This sequence belongs to the SecD/SecF family. SecF subfamily. Forms a complex with SecD. Part of the essential Sec protein translocation apparatus which comprises SecA, SecYEG and auxiliary proteins SecDF-YajC and YidC.

The protein resides in the cell inner membrane. In terms of biological role, part of the Sec protein translocase complex. Interacts with the SecYEG preprotein conducting channel. SecDF uses the proton motive force (PMF) to complete protein translocation after the ATP-dependent function of SecA. This is Protein translocase subunit SecF from Rickettsia felis (strain ATCC VR-1525 / URRWXCal2) (Rickettsia azadi).